Reading from the N-terminus, the 175-residue chain is Nudix hydrolase 25 (175 aa).

Residues 7–155 enclose the Nudix hydrolase domain; the sequence is GYRPNVGVCL…KRPTYEEVIK (149 aa). The Mn(2+) site is built by Gly-40, Glu-55, and Glu-59. A Nudix box motif is present at residues 40–61; sequence GGIEDGEDPKSAAMRELQEETG.

Belongs to the Nudix hydrolase family. Mn(2+) is required as a cofactor.

The enzyme catalyses P(1),P(4)-bis(5'-guanosyl) tetraphosphate + H2O = GMP + GTP + 2 H(+). Functionally, mediates the hydrolysis of diadenosine 5',5''-P(1)P(4) tetraphosphate (Ap(4)A), a signaling molecule involved in regulation of DNA replication and repair. The chain is Nudix hydrolase 25 from Arabidopsis thaliana (Mouse-ear cress).